Here is a 255-residue protein sequence, read N- to C-terminus: BTB/POZ domain-containing protein KCTD14 (255 aa).

The disordered stretch occupies residues 1–29 (MWQGCAVERPVGRMTSQTPLPQSPRPRRP). In terms of domain architecture, BTB spans 33-130 (TVVELNVGGE…LLEDMPQIFG (98 aa)).

This chain is BTB/POZ domain-containing protein KCTD14 (KCTD14), found in Homo sapiens (Human).